A 105-amino-acid polypeptide reads, in one-letter code: MRGAHYVAIVLLVAAGGQTAAGFDQDEPQHAPDNGYMASVDLRNEFLQSRALQASRNPKDDLMFSAGDEERTPLARSNYLKKVTIPDSIINTANAMRMEGKQVRL.

Positions M1–G22 are cleaved as a signal peptide. Residues R50–R71 carry the RxLR-dEER motif.

It belongs to the RxLR effector family.

It localises to the secreted. The protein localises to the host nucleus. It is found in the host cytoplasm. Secreted effector that partially suppresses the host cell death induced by cell death-inducing proteins. This Plasmopara viticola (Downy mildew of grapevine) protein is Secreted RxLR effector protein 158.